The chain runs to 393 residues: tRNA(Met) cytidine acetate ligase (393 aa).

Positions 81, 142, and 167 each coordinate ATP.

This sequence belongs to the TmcAL family.

The protein resides in the cytoplasm. The enzyme catalyses cytidine(34) in elongator tRNA(Met) + acetate + ATP = N(4)-acetylcytidine(34) in elongator tRNA(Met) + AMP + diphosphate. Functionally, catalyzes the formation of N(4)-acetylcytidine (ac(4)C) at the wobble position of elongator tRNA(Met), using acetate and ATP as substrates. First activates an acetate ion to form acetyladenylate (Ac-AMP) and then transfers the acetyl group to tRNA to form ac(4)C34. The sequence is that of tRNA(Met) cytidine acetate ligase from Bacillus cereus (strain ZK / E33L).